A 340-amino-acid chain; its full sequence is DNA-directed RNA polymerase subunit alpha (340 aa).

Positions 1–233 (MIQNEIPIPA…NLFIPLLHEK (233 aa)) are alpha N-terminal domain (alpha-NTD). Residues 263-340 (RKEISFKHIF…LPKNKFSIND (78 aa)) form an alpha C-terminal domain (alpha-CTD) region.

It belongs to the RNA polymerase alpha chain family. In plastids the minimal PEP RNA polymerase catalytic core is composed of four subunits: alpha, beta, beta', and beta''. When a (nuclear-encoded) sigma factor is associated with the core the holoenzyme is formed, which can initiate transcription.

The protein resides in the plastid. It localises to the chloroplast. The catalysed reaction is RNA(n) + a ribonucleoside 5'-triphosphate = RNA(n+1) + diphosphate. DNA-dependent RNA polymerase catalyzes the transcription of DNA into RNA using the four ribonucleoside triphosphates as substrates. This Anthoceros angustus (Hornwort) protein is DNA-directed RNA polymerase subunit alpha (rpoA).